The primary structure comprises 209 residues: Small ribosomal subunit protein uS4 (209 aa).

The interval 23–46 (SRNPLLKKPHPPGQHGMQRKKKSD) is disordered. Positions 93–153 (CRLDNMVYRM…EKSKRLQSVK (61 aa)) constitute an S4 RNA-binding domain.

It belongs to the universal ribosomal protein uS4 family. In terms of assembly, part of the 30S ribosomal subunit. Contacts protein S5. The interaction surface between S4 and S5 is involved in control of translational fidelity.

One of the primary rRNA binding proteins, it binds directly to 16S rRNA where it nucleates assembly of the body of the 30S subunit. Functionally, with S5 and S12 plays an important role in translational accuracy. The protein is Small ribosomal subunit protein uS4 of Chlamydia pneumoniae (Chlamydophila pneumoniae).